A 78-amino-acid chain; its full sequence is MPVIAIIAIVIIVIILNKTGVSDSLTALTLATVAALLTGGGAAGAASVALTPFVGVPVGIFVGIYVFAKVVRLISGKK.

The first 45 residues, 1 to 45 (MPVIAIIAIVIIVIILNKTGVSDSLTALTLATVAALLTGGGAAGA), serve as a signal peptide directing secretion.

This sequence to E.coli YkfL.

This is an uncharacterized protein from Escherichia coli (strain K12).